Reading from the N-terminus, the 75-residue chain is uncharacterized protein (75 aa).

Residues 44–64 (IINMIVIWAALIALFVKLYIL) traverse the membrane as a helical segment.

It localises to the host membrane. This is an uncharacterized protein from Ostreid herpesvirus 1 (isolate France) (OsHV-1).